Reading from the N-terminus, the 1241-residue chain is Nephrin (1241 aa).

The first 22 residues, 1–22, serve as a signal peptide directing secretion; it reads MALGTTLRASLLLLGLLTEGLA. Residues 23–1055 lie on the Extracellular side of the membrane; sequence QLAIPASVPR…EDQLPTEPPS (1033 aa). Ig-like C2-type domains are found at residues 27 to 130, 143 to 234, 242 to 333, 340 to 434, 440 to 540, and 544 to 635; these read PASV…VILS, EAGT…SFTV, PPVI…HGIT, PSAI…KSLI, PAQK…TQLA, and PPTN…ETVS. The N-linked (GlcNAc...) asparagine glycan is linked to N40. Intrachain disulfides connect C53–C111, C160–C217, and C265–C317. N-linked (GlcNAc...) asparagine glycans are attached at residues N356 and N401. C361 and C417 are disulfide-bonded. S432 is modified (phosphoserine). C465 and C528 are oxidised to a cystine. N547, N553, N564, N577, N680, and N708 each carry an N-linked (GlcNAc...) asparagine glycan. A disulfide bridge links C567 with C623. Ig-like C2-type domains follow at residues 740–832 and 838–939; these read PTIR…LLRL and PQVE…VSIS. Intrachain disulfides connect C761-C816 and C863-C920. Residue N908 is glycosylated (N-linked (GlcNAc...) asparagine). Residues 943–1038 enclose the Fibronectin type-III domain; the sequence is PPSGLKVVSL…TQLPITTPGL (96 aa). The interval 1025–1057 is disordered; it reads ADKGTQLPITTPGLHQPSGEPEDQLPTEPPSGP. The chain crosses the membrane as a helical span at residues 1056-1076; it reads GPSGLPLLPVLFALGGLLLLS. At 1077–1241 the chain is on the cytoplasmic side; it reads NASCVGGVLW…LPFELRGHLV (165 aa). S1098 bears the Phosphoserine mark. The segment covering 1099-1114 has biased composition (basic and acidic residues); it reads EKTEAGSEEDRVRNEY. A disordered region spans residues 1099–1137; sequence EKTEAGSEEDRVRNEYEESQWTGERDTQSSTVSTTEAEP. Phosphothreonine is present on T1101. S1105 is modified (phosphoserine). The segment at 1160 to 1241 is binds to NPHS2; the sequence is RGFTGEDEDM…LPFELRGHLV (82 aa). Y1193 is modified (phosphotyrosine; by FYN).

It belongs to the immunoglobulin superfamily. Interacts with CD2AP (via C-terminal domain). Interacts with MAGI1 (via PDZ 2 and 3 domains) forming a tripartite complex with IGSF5/JAM4. Interacts with DDN; the interaction is direct. Self-associates (via the Ig-like domains). Also interacts (via the Ig-like domains) with KIRREL1/NEPH1 and KIRREL2; the interaction with KIRREL1 is dependent on KIRREL1 glycosylation. Interacts with KIRREL3. Forms a complex with ACTN4, CASK, IQGAP1, MAGI2, SPTAN1 and SPTBN1. Interacts with NPHS2. Interacts with phosphatidylinositol 3-kinase regulatory subunit PIK3R1; the interaction is reduced by high glucose levels. In terms of processing, phosphorylated at Tyr-1193 by FYN, leading to the recruitment and activation of phospholipase C-gamma-1/PLCG1. Tyrosine phosphorylation is reduced by high glucose levels. Dephosphorylated by tensin TNS2 which leads to reduced binding of NPHN1 to PIK3R1. As to expression, specifically expressed in podocytes of kidney glomeruli.

The protein localises to the cell membrane. Its function is as follows. Seems to play a role in the development or function of the kidney glomerular filtration barrier. Regulates glomerular vascular permeability. May anchor the podocyte slit diaphragm to the actin cytoskeleton. Plays a role in skeletal muscle formation through regulation of myoblast fusion. The chain is Nephrin (NPHS1) from Homo sapiens (Human).